A 70-amino-acid chain; its full sequence is uncharacterized protein (70 aa).

This is an uncharacterized protein from Treponema pallidum (strain Nichols).